We begin with the raw amino-acid sequence, 120 residues long: Glycine cleavage system H protein (120 aa).

The region spanning valine 17–lysine 99 is the Lipoyl-binding domain. Position 58 is an N6-lipoyllysine (lysine 58).

Belongs to the GcvH family. As to quaternary structure, the glycine cleavage system is composed of four proteins: P, T, L and H. It depends on (R)-lipoate as a cofactor.

Functionally, the glycine cleavage system catalyzes the degradation of glycine. The H protein shuttles the methylamine group of glycine from the P protein to the T protein. The polypeptide is Glycine cleavage system H protein (Sinorhizobium fredii (strain NBRC 101917 / NGR234)).